We begin with the raw amino-acid sequence, 202 residues long: Large ribosomal subunit protein uL18 (202 aa).

It belongs to the universal ribosomal protein uL18 family. As to quaternary structure, part of the 50S ribosomal subunit. Contacts the 5S and 23S rRNAs.

In terms of biological role, this is one of the proteins that bind and probably mediate the attachment of the 5S RNA into the large ribosomal subunit, where it forms part of the central protuberance. The chain is Large ribosomal subunit protein uL18 from Methanopyrus kandleri (strain AV19 / DSM 6324 / JCM 9639 / NBRC 100938).